The following is a 56-amino-acid chain: Small ribosomal subunit protein uS14 (56 aa).

Residues cysteine 21, cysteine 24, cysteine 39, and cysteine 42 each contribute to the Zn(2+) site.

It belongs to the universal ribosomal protein uS14 family. Zn(2+) is required as a cofactor.

The sequence is that of Small ribosomal subunit protein uS14 (RPS29) from Candida glabrata (strain ATCC 2001 / BCRC 20586 / JCM 3761 / NBRC 0622 / NRRL Y-65 / CBS 138) (Yeast).